Reading from the N-terminus, the 114-residue chain is Cytochrome c oxidase subunit 4B (114 aa).

The next 3 helical transmembrane spans lie at 29–49, 56–76, and 89–109; these read QIVV…AVAT, FAIP…LFFF, and AFMI…MLLL.

The protein belongs to the cytochrome c oxidase bacterial subunit 4 family.

It localises to the cell membrane. It catalyses the reaction 4 Fe(II)-[cytochrome c] + O2 + 8 H(+)(in) = 4 Fe(III)-[cytochrome c] + 2 H2O + 4 H(+)(out). The polypeptide is Cytochrome c oxidase subunit 4B (ctaF) (Alkalihalophilus pseudofirmus (strain ATCC BAA-2126 / JCM 17055 / OF4) (Bacillus pseudofirmus)).